Consider the following 201-residue polypeptide: UPF0323 lipoprotein Cj0371 (201 aa).

Positions 1-26 (MKKIKKIIQIGMIGGLAAVAGGALAG) are cleaved as a signal peptide. Cysteine 27 carries the N-palmitoyl cysteine lipid modification. Cysteine 27 carries S-diacylglycerol cysteine lipidation. Residues 169–201 (NKAGTTSSASSAKKSGFFGGGSKATSSSSSFGS) are disordered. 2 stretches are compositionally biased toward low complexity: residues 170–184 (KAGT…KKSG) and 191–201 (KATSSSSSFGS).

Belongs to the UPF0323 family.

The protein localises to the cell membrane. This Campylobacter jejuni subsp. jejuni serotype O:2 (strain ATCC 700819 / NCTC 11168) protein is UPF0323 lipoprotein Cj0371.